A 178-amino-acid polypeptide reads, in one-letter code: Putative peroxiredoxin in rubredoxin operon (178 aa).

The Thioredoxin domain maps to 3–163 (RLVGKPAPEF…TLRVLKAFQT (161 aa)). The active-site Cysteine sulfenic acid (-SOH) intermediate is the cysteine 50.

This sequence belongs to the peroxiredoxin family. AhpC/Prx1 subfamily. As to quaternary structure, homodimer; disulfide-linked, upon oxidation.

It is found in the cytoplasm. It carries out the reaction a hydroperoxide + [protein]-dithiol = [protein]-disulfide + an alcohol + H2O. Thiol-specific peroxidase that catalyzes the reduction of hydrogen peroxide and organic hydroperoxides to water and alcohols, respectively. Plays a role in cell protection against oxidative stress by detoxifying peroxides. The polypeptide is Putative peroxiredoxin in rubredoxin operon (Clostridium pasteurianum).